Reading from the N-terminus, the 246-residue chain is 4-hydroxy-tetrahydrodipicolinate reductase (246 aa).

Position 9–14 (9–14) interacts with NAD(+); it reads GNTGRM. Residue Arg-36 coordinates NADP(+). NAD(+) is bound by residues 78–80 and 104–107; these read GTT and SPNM. His-137 (proton donor/acceptor) is an active-site residue. Residue His-138 coordinates (S)-2,3,4,5-tetrahydrodipicolinate. Lys-141 serves as the catalytic Proton donor. 147-148 provides a ligand contact to (S)-2,3,4,5-tetrahydrodipicolinate; that stretch reads GT.

This sequence belongs to the DapB family.

Its subcellular location is the cytoplasm. It carries out the reaction (S)-2,3,4,5-tetrahydrodipicolinate + NAD(+) + H2O = (2S,4S)-4-hydroxy-2,3,4,5-tetrahydrodipicolinate + NADH + H(+). The catalysed reaction is (S)-2,3,4,5-tetrahydrodipicolinate + NADP(+) + H2O = (2S,4S)-4-hydroxy-2,3,4,5-tetrahydrodipicolinate + NADPH + H(+). The protein operates within amino-acid biosynthesis; L-lysine biosynthesis via DAP pathway; (S)-tetrahydrodipicolinate from L-aspartate: step 4/4. Its function is as follows. Catalyzes the conversion of 4-hydroxy-tetrahydrodipicolinate (HTPA) to tetrahydrodipicolinate. This Chlamydia muridarum (strain MoPn / Nigg) protein is 4-hydroxy-tetrahydrodipicolinate reductase.